A 331-amino-acid polypeptide reads, in one-letter code: 4-hydroxy-3-methylbut-2-enyl diphosphate reductase (331 aa).

[4Fe-4S] cluster is bound at residue Cys12. The (2E)-4-hydroxy-3-methylbut-2-enyl diphosphate site is built by His43 and His81. 2 residues coordinate dimethylallyl diphosphate: His43 and His81. Residues His43 and His81 each coordinate isopentenyl diphosphate. Position 103 (Cys103) interacts with [4Fe-4S] cluster. His131 contacts (2E)-4-hydroxy-3-methylbut-2-enyl diphosphate. Dimethylallyl diphosphate is bound at residue His131. His131 provides a ligand contact to isopentenyl diphosphate. Glu133 (proton donor) is an active-site residue. (2E)-4-hydroxy-3-methylbut-2-enyl diphosphate is bound at residue Thr170. Cys198 provides a ligand contact to [4Fe-4S] cluster. (2E)-4-hydroxy-3-methylbut-2-enyl diphosphate contacts are provided by Ser226, Asn228, and Ser271. Residues Ser226, Asn228, and Ser271 each coordinate dimethylallyl diphosphate. Positions 226, 228, and 271 each coordinate isopentenyl diphosphate.

This sequence belongs to the IspH family. It depends on [4Fe-4S] cluster as a cofactor.

It carries out the reaction isopentenyl diphosphate + 2 oxidized [2Fe-2S]-[ferredoxin] + H2O = (2E)-4-hydroxy-3-methylbut-2-enyl diphosphate + 2 reduced [2Fe-2S]-[ferredoxin] + 2 H(+). It catalyses the reaction dimethylallyl diphosphate + 2 oxidized [2Fe-2S]-[ferredoxin] + H2O = (2E)-4-hydroxy-3-methylbut-2-enyl diphosphate + 2 reduced [2Fe-2S]-[ferredoxin] + 2 H(+). The protein operates within isoprenoid biosynthesis; dimethylallyl diphosphate biosynthesis; dimethylallyl diphosphate from (2E)-4-hydroxy-3-methylbutenyl diphosphate: step 1/1. It functions in the pathway isoprenoid biosynthesis; isopentenyl diphosphate biosynthesis via DXP pathway; isopentenyl diphosphate from 1-deoxy-D-xylulose 5-phosphate: step 6/6. Functionally, catalyzes the conversion of 1-hydroxy-2-methyl-2-(E)-butenyl 4-diphosphate (HMBPP) into a mixture of isopentenyl diphosphate (IPP) and dimethylallyl diphosphate (DMAPP). Acts in the terminal step of the DOXP/MEP pathway for isoprenoid precursor biosynthesis. The polypeptide is 4-hydroxy-3-methylbut-2-enyl diphosphate reductase (Listeria monocytogenes serotype 4b (strain CLIP80459)).